We begin with the raw amino-acid sequence, 56 residues long: MGFADLWYSHPRKYGQGSRFCRACSNNHGMIRKYGLNICRQCFREYAKDIGFRKLD.

Zn(2+) is bound by residues C21, C24, C39, and C42.

The protein belongs to the universal ribosomal protein uS14 family. As to quaternary structure, component of the 40S small ribosomal subunit. The cofactor is Zn(2+).

Its subcellular location is the cytoplasm. It is found in the cytosol. It localises to the rough endoplasmic reticulum. This Culex quinquefasciatus (Southern house mosquito) protein is Small ribosomal subunit protein uS14 (RpS29).